A 354-amino-acid polypeptide reads, in one-letter code: Methylthioribose-1-phosphate isomerase (354 aa).

Catalysis depends on D246, which acts as the Proton donor.

This sequence belongs to the eIF-2B alpha/beta/delta subunits family. MtnA subfamily.

It is found in the cytoplasm. It localises to the nucleus. It catalyses the reaction 5-(methylsulfanyl)-alpha-D-ribose 1-phosphate = 5-(methylsulfanyl)-D-ribulose 1-phosphate. The protein operates within amino-acid biosynthesis; L-methionine biosynthesis via salvage pathway; L-methionine from S-methyl-5-thio-alpha-D-ribose 1-phosphate: step 1/6. Catalyzes the interconversion of methylthioribose-1-phosphate (MTR-1-P) into methylthioribulose-1-phosphate (MTRu-1-P). The sequence is that of Methylthioribose-1-phosphate isomerase (mri1) from Xenopus tropicalis (Western clawed frog).